The primary structure comprises 351 residues: Photosystem II D2 protein (351 aa).

The helical transmembrane segment at 39 to 59 (CAFLALGGWLTGTTFVTSWYT) threads the bilayer. Residue histidine 116 coordinates chlorophyll a. The helical transmembrane segment at 123-139 (GFMLRQFEIARLVGIRP) threads the bilayer. The pheophytin a site is built by glutamine 128 and asparagine 141. Residues 151 to 164 (VFVSVFLMYPLGQS) form a helical membrane-spanning segment. Residue histidine 196 coordinates chlorophyll a. Residues 206 to 226 (GALLCAIHGATVENTLFEDGD) form a helical membrane-spanning segment. A plastoquinone-binding residues include histidine 213 and phenylalanine 260. Residue histidine 213 coordinates Fe cation. A Fe cation-binding site is contributed by histidine 267. Residues 277–293 (GLWMSAVGIVGLALNLR) form a helical membrane-spanning segment.

Belongs to the reaction center PufL/M/PsbA/D family. PSII is composed of 1 copy each of membrane proteins PsbA, PsbB, PsbC, PsbD, PsbE, PsbF, PsbH, PsbI, PsbJ, PsbK, PsbL, PsbM, PsbT, PsbX, PsbY, PsbZ, Psb30/Ycf12, peripheral proteins PsbO, CyanoQ (PsbQ), PsbU, PsbV and a large number of cofactors. It forms dimeric complexes. It depends on The D1/D2 heterodimer binds P680, chlorophylls that are the primary electron donor of PSII, and subsequent electron acceptors. It shares a non-heme iron and each subunit binds pheophytin, quinone, additional chlorophylls, carotenoids and lipids. There is also a Cl(-1) ion associated with D1 and D2, which is required for oxygen evolution. The PSII complex binds additional chlorophylls, carotenoids and specific lipids. as a cofactor.

The protein resides in the cellular thylakoid membrane. The catalysed reaction is 2 a plastoquinone + 4 hnu + 2 H2O = 2 a plastoquinol + O2. In terms of biological role, photosystem II (PSII) is a light-driven water:plastoquinone oxidoreductase that uses light energy to abstract electrons from H(2)O, generating O(2) and a proton gradient subsequently used for ATP formation. It consists of a core antenna complex that captures photons, and an electron transfer chain that converts photonic excitation into a charge separation. The D1/D2 (PsbA/PsbD) reaction center heterodimer binds P680, the primary electron donor of PSII as well as several subsequent electron acceptors. D2 is needed for assembly of a stable PSII complex. In Nostoc punctiforme (strain ATCC 29133 / PCC 73102), this protein is Photosystem II D2 protein.